The chain runs to 359 residues: Maleylacetate reductase 2 (359 aa).

It belongs to the iron-containing alcohol dehydrogenase family. As to quaternary structure, homodimer.

It catalyses the reaction 3-oxoadipate + NAD(+) = maleylacetate + NADH + H(+). It carries out the reaction 3-oxoadipate + NADP(+) = maleylacetate + NADPH + H(+). It participates in aromatic compound metabolism; 3-chlorocatechol degradation. With respect to regulation, inhibited by p-chloromercuribenzoate and by 3-oxoadipate, and, in a temperature-dependent manner, by manganese. In terms of biological role, plays a major role in the degradation of chloroaromatic compounds by channeling maleylacetate and some of its substituted derivatives into the 3-oxoadipate pathway. This enzyme converts maleylacetate and 2-chloromaleylacetate with similar efficiencies. NADH is preferred to NADPH as the cosubstrate. This is Maleylacetate reductase 2 (tfdFII) from Cupriavidus pinatubonensis (strain JMP 134 / LMG 1197) (Cupriavidus necator (strain JMP 134)).